Reading from the N-terminus, the 219-residue chain is Interleukin-12 subunit alpha (219 aa).

Residues 1–22 form the signal peptide; the sequence is MCPARSLLLVATLVLLDHLSLA. 3 cysteine pairs are disulfide-bonded: Cys-37/Cys-110, Cys-64/Cys-196, and Cys-85/Cys-123. 2 N-linked (GlcNAc...) asparagine glycosylation sites follow: Asn-93 and Asn-107.

This sequence belongs to the IL-6 superfamily. As to quaternary structure, heterodimer with IL12B; disulfide-linked. This heterodimer is known as interleukin IL-12. Heterodimer with EBI3/IL27B; not disulfide-linked. This heterodimer is known as interleukin IL-35. Interacts with NBR1; this interaction promotes IL-12 secretion.

The protein localises to the secreted. In terms of biological role, heterodimerizes with IL12B to form the IL-12 cytokine or with EBI3/IL27B to form the IL-35 cytokine. IL-12 is primarily produced by professional antigen-presenting cells (APCs) such as B-cells and dendritic cells (DCs) as well as macrophages and granulocytes and regulates T-cell and natural killer-cell responses, induces the production of interferon-gamma (IFN-gamma), favors the differentiation of T-helper 1 (Th1) cells and is an important link between innate resistance and adaptive immunity. Mechanistically, exerts its biological effects through a receptor composed of IL12R1 and IL12R2 subunits. Binding to the receptor results in the rapid tyrosine phosphorylation of a number of cellular substrates including the JAK family kinases TYK2 and JAK2. In turn, recruited STAT4 gets phosphorylated and translocates to the nucleus where it regulates cytokine/growth factor responsive genes. As part of IL-35, plays essential roles in maintaining the immune homeostasis of the liver microenvironment and also functions as an immune-suppressive cytokine. Mediates biological events through unconventional receptors composed of IL12RB2 and gp130/IL6ST heterodimers or homodimers. Signaling requires the transcription factors STAT1 and STAT4, which form a unique heterodimer that binds to distinct DNA sites. The polypeptide is Interleukin-12 subunit alpha (IL12A) (Homo sapiens (Human)).